The sequence spans 757 residues: LPS-assembly protein LptD (757 aa).

An N-terminal signal peptide occupies residues 1 to 20 (MLQRFITSLMLLPFPGSALA).

Belongs to the LptD family. Component of the lipopolysaccharide transport and assembly complex. Interacts with LptE and LptA.

It localises to the cell outer membrane. Functionally, together with LptE, is involved in the assembly of lipopolysaccharide (LPS) at the surface of the outer membrane. This is LPS-assembly protein LptD from Idiomarina loihiensis (strain ATCC BAA-735 / DSM 15497 / L2-TR).